Reading from the N-terminus, the 427-residue chain is Serine--tRNA ligase 2 (427 aa).

A compositionally biased stretch (basic and acidic residues) spans 35 to 53 (RRRSEAQAEVTRLRTELNR). A disordered region spans residues 35-72 (RRRSEAQAEVTRLRTELNRTSRARGRSGPPSEEEKEAA). 230-232 (TAE) is a binding site for L-serine. Residue 261-263 (RAE) coordinates ATP. Glutamate 284 is an L-serine binding site. 348–351 (EISS) contributes to the ATP binding site. Serine 383 lines the L-serine pocket.

Belongs to the class-II aminoacyl-tRNA synthetase family. Type-1 seryl-tRNA synthetase subfamily. In terms of assembly, homodimer. The tRNA molecule binds across the dimer.

The protein resides in the cytoplasm. It catalyses the reaction tRNA(Ser) + L-serine + ATP = L-seryl-tRNA(Ser) + AMP + diphosphate + H(+). It carries out the reaction tRNA(Sec) + L-serine + ATP = L-seryl-tRNA(Sec) + AMP + diphosphate + H(+). It participates in aminoacyl-tRNA biosynthesis; selenocysteinyl-tRNA(Sec) biosynthesis; L-seryl-tRNA(Sec) from L-serine and tRNA(Sec): step 1/1. In terms of biological role, catalyzes the attachment of serine to tRNA(Ser). Is also able to aminoacylate tRNA(Sec) with serine, to form the misacylated tRNA L-seryl-tRNA(Sec), which will be further converted into selenocysteinyl-tRNA(Sec). This is Serine--tRNA ligase 2 from Streptomyces avermitilis (strain ATCC 31267 / DSM 46492 / JCM 5070 / NBRC 14893 / NCIMB 12804 / NRRL 8165 / MA-4680).